Reading from the N-terminus, the 493-residue chain is Ketol-acid reductoisomerase (NADP(+)) (493 aa).

Positions 14-208 (LDQLGRCRFM…GGHRAGVLES (195 aa)) constitute a KARI N-terminal Rossmann domain. NADP(+)-binding positions include 45–48 (CGAQ), arginine 68, arginine 76, serine 78, and 108–110 (DKQ). Residue histidine 132 is part of the active site. Glycine 158 provides a ligand contact to NADP(+). KARI C-terminal knotted domains follow at residues 209 to 345 (SFVA…APKG) and 346 to 486 (ENIK…MTDM). The Mg(2+) site is built by aspartate 217, glutamate 221, glutamate 390, and glutamate 394. A substrate-binding site is contributed by serine 415.

It belongs to the ketol-acid reductoisomerase family. The cofactor is Mg(2+).

The enzyme catalyses (2R)-2,3-dihydroxy-3-methylbutanoate + NADP(+) = (2S)-2-acetolactate + NADPH + H(+). It carries out the reaction (2R,3R)-2,3-dihydroxy-3-methylpentanoate + NADP(+) = (S)-2-ethyl-2-hydroxy-3-oxobutanoate + NADPH + H(+). It functions in the pathway amino-acid biosynthesis; L-isoleucine biosynthesis; L-isoleucine from 2-oxobutanoate: step 2/4. It participates in amino-acid biosynthesis; L-valine biosynthesis; L-valine from pyruvate: step 2/4. Its function is as follows. Involved in the biosynthesis of branched-chain amino acids (BCAA). Catalyzes an alkyl-migration followed by a ketol-acid reduction of (S)-2-acetolactate (S2AL) to yield (R)-2,3-dihydroxy-isovalerate. In the isomerase reaction, S2AL is rearranged via a Mg-dependent methyl migration to produce 3-hydroxy-3-methyl-2-ketobutyrate (HMKB). In the reductase reaction, this 2-ketoacid undergoes a metal-dependent reduction by NADPH to yield (R)-2,3-dihydroxy-isovalerate. The chain is Ketol-acid reductoisomerase (NADP(+)) from Histophilus somni (strain 129Pt) (Haemophilus somnus).